The primary structure comprises 505 residues: Lysine--tRNA ligase, heat inducible (505 aa).

N6-acetyllysine occurs at positions 114 and 156. Mg(2+)-binding residues include glutamate 415 and glutamate 422.

This sequence belongs to the class-II aminoacyl-tRNA synthetase family. In terms of assembly, homodimer. Mg(2+) serves as cofactor.

Its subcellular location is the cytoplasm. It catalyses the reaction tRNA(Lys) + L-lysine + ATP = L-lysyl-tRNA(Lys) + AMP + diphosphate. In Escherichia coli O6:H1 (strain CFT073 / ATCC 700928 / UPEC), this protein is Lysine--tRNA ligase, heat inducible (lysU).